Consider the following 283-residue polypeptide: Acetylglutamate kinase (283 aa).

Substrate contacts are provided by residues 64 to 65 (GG), arginine 86, and asparagine 179.

The protein belongs to the acetylglutamate kinase family. ArgB subfamily.

The protein resides in the cytoplasm. It catalyses the reaction N-acetyl-L-glutamate + ATP = N-acetyl-L-glutamyl 5-phosphate + ADP. It functions in the pathway amino-acid biosynthesis; L-arginine biosynthesis; N(2)-acetyl-L-ornithine from L-glutamate: step 2/4. Catalyzes the ATP-dependent phosphorylation of N-acetyl-L-glutamate. This chain is Acetylglutamate kinase, found in Campylobacter hominis (strain ATCC BAA-381 / DSM 21671 / CCUG 45161 / LMG 19568 / NCTC 13146 / CH001A).